The chain runs to 25 residues: Plasticin-L1 (25 aa).

The protein belongs to the frog skin active peptide (FSAP) family. Plasticin subfamily. In terms of tissue distribution, expressed by the skin glands.

The protein localises to the secreted. It localises to the target cell membrane. In terms of biological role, may play an immunomodulatory role in frog skin in response to microbial pathogens, since it increases the production of the pro-inflammatory cytokines TNF-alpha, IL-1 beta, IL-12, and IL-23 by mouse peritoneal macrophages and has no effect on the production of the anti-inflammatory cytokine IL-10. It is not known whether stimulation of cytokine production arises from a non-specific interaction of the peptide with the macrophage membrane or from interaction with a specific receptor. Shows a low activity in stimulating insulin release from rat BRIN-BD11 beta cells, and acts without loss of integrity of the plasma membrane. Shows a marked affinity for both neutral and anionic membranes models. Does not show antibacterial (E.coli and S.aureus). Does not show hemolytic activity against human erythrocytes. The chain is Plasticin-L1 from Leptodactylus laticeps (Santa Fe frog).